The chain runs to 416 residues: Serine/threonine transporter SstT (416 aa).

The next 9 helical transmembrane spans lie at 15 to 35 (SLVS…MFMP), 49 to 69 (VGAL…AAII), 82 to 102 (ILLL…VASF), 141 to 161 (ALLD…GIAM), 192 to 212 (LGIL…ALFG), 217 to 237 (LVVL…LIVF), 288 to 308 (VSIP…ITVL), 316 to 336 (LGME…TISA), and 363 to 383 (IAMQ…SAET).

This sequence belongs to the dicarboxylate/amino acid:cation symporter (DAACS) (TC 2.A.23) family.

It localises to the cell inner membrane. It carries out the reaction L-serine(in) + Na(+)(in) = L-serine(out) + Na(+)(out). The catalysed reaction is L-threonine(in) + Na(+)(in) = L-threonine(out) + Na(+)(out). In terms of biological role, involved in the import of serine and threonine into the cell, with the concomitant import of sodium (symport system). The polypeptide is Serine/threonine transporter SstT (Aeromonas hydrophila subsp. hydrophila (strain ATCC 7966 / DSM 30187 / BCRC 13018 / CCUG 14551 / JCM 1027 / KCTC 2358 / NCIMB 9240 / NCTC 8049)).